We begin with the raw amino-acid sequence, 94 residues long: MTKSELIELLAKKNPSISTKIVENSVKEILEQMSGSLENSDRIEIRGFGSFSLHYRQPRLGRNPKTGESVKLDAKCVPHFKAGKELKERVDFKA.

It belongs to the bacterial histone-like protein family. Heterodimer of an alpha and a beta chain.

In terms of biological role, this protein is one of the two subunits of integration host factor, a specific DNA-binding protein that functions in genetic recombination as well as in transcriptional and translational control. This chain is Integration host factor subunit beta, found in Actinobacillus succinogenes (strain ATCC 55618 / DSM 22257 / CCUG 43843 / 130Z).